The primary structure comprises 129 residues: Large ribosomal subunit protein uL22 (129 aa).

It belongs to the universal ribosomal protein uL22 family. As to quaternary structure, part of the 50S ribosomal subunit.

This protein binds specifically to 23S rRNA; its binding is stimulated by other ribosomal proteins, e.g. L4, L17, and L20. It is important during the early stages of 50S assembly. It makes multiple contacts with different domains of the 23S rRNA in the assembled 50S subunit and ribosome. In terms of biological role, the globular domain of the protein is located near the polypeptide exit tunnel on the outside of the subunit, while an extended beta-hairpin is found that lines the wall of the exit tunnel in the center of the 70S ribosome. The protein is Large ribosomal subunit protein uL22 of Agrobacterium fabrum (strain C58 / ATCC 33970) (Agrobacterium tumefaciens (strain C58)).